We begin with the raw amino-acid sequence, 238 residues long: Sarcospan (238 aa).

Residues 1-33 form a disordered region; that stretch reads MGKDRQPRGQQRQGDAAGPDDPGPKKGAGTREQ. Residues 1–48 are Extracellular-facing; the sequence is MGKDRQPRGQQRQGDAAGPDDPGPKKGAGTREQRGEEEAQTCCGCRFP. The span at 8–20 shows a compositional bias: low complexity; that stretch reads RGQQRQGDAAGPD. Residues 49 to 69 form a helical membrane-spanning segment; the sequence is LLLALLQLALGVAVTVVGFLM. At 70 to 81 the chain is on the cytoplasmic side; that stretch reads ASVSSSLLVRAT. A helical transmembrane segment spans residues 82-102; that stretch reads PYWAGIIVCVVAYLGLFMLCV. Topologically, residues 103 to 117 are cytoplasmic; sequence SYQVDERTCIQFSMK. A helical transmembrane segment spans residues 118–138; it reads LLYFVLSALGLVVCVLAVAFA. Residues 139–188 are Extracellular-facing; the sequence is AHHYSLLTHLTCENAPDSCQCKLPSSEPLSRTFVYRDVTDCTSITGTFQV. The chain crosses the membrane as a helical span at residues 189-209; it reads FLLVQMVLNLVCGLVCLVACF. Topologically, residues 210–238 are cytoplasmic; that stretch reads VMWKHRYQVFYVGVRMCPLSASEGQQQKV.

The protein localises to the cell membrane. Its subcellular location is the sarcolemma. It is found in the postsynaptic cell membrane. Component of the dystrophin-glycoprotein complex (DGC), a complex that spans the muscle plasma membrane and forms a link between the F-actin cytoskeleton and the extracellular matrix. Preferentially associates with the sarcoglycan subcomplex of the DGC. In Oryctolagus cuniculus (Rabbit), this protein is Sarcospan (SSPN).